Here is a 1097-residue protein sequence, read N- to C-terminus: DNA polymerase catalytic subunit (1097 aa).

A disordered region spans residues 1069–1097 (RGGDDSDGGDSEKENMDTERSSSHEAMET). The segment covering 1078-1097 (DSEKENMDTERSSSHEAMET) has biased composition (basic and acidic residues).

Belongs to the DNA polymerase type-B family.

Its subcellular location is the host nucleus. It carries out the reaction DNA(n) + a 2'-deoxyribonucleoside 5'-triphosphate = DNA(n+1) + diphosphate. The polypeptide is DNA polymerase catalytic subunit (UL54) (Murid herpesvirus 1 (strain Smith) (MuHV-1)).